A 252-amino-acid polypeptide reads, in one-letter code: CLAVATA3/ESR (CLE)-related protein 4A-2 (252 aa).

Residues 1 to 21 (MAKNAMLCLLILRVVLALAFA) form the signal peptide. The segment at 21 to 83 (ATNKKGDEEP…SNQLPNNNWM (63 aa)) is required for secretion from the host cytoplasm to the host apoplasm. Asparagine 32 is a glycosylation site (N-linked (GlcNAc...) asparagine). A disordered region spans residues 116 to 252 (RKTGMHSQRH…APAGPDPIHH (137 aa)). Composition is skewed to basic and acidic residues over residues 125-137 (HHEE…EKRV), 144-179 (PIHH…EKRV), 186-200 (PIHH…EKRA), and 207-242 (PTHH…EKRG). The stretch at 127 to 135 (EETTLEQEK) is one A-1 repeat. Residues 127 to 219 (EETTLEQEKR…HEETTLEQEK (93 aa)) are 6 X approximate repeat A. Residues 136 to 147 (RVAGAGPDPIHH) form a CLE-1 repeat. The tract at residues 136-252 (RVAGAGPDPI…APAGPDPIHH (117 aa)) is 6 X approximate repeat CLE. An A-2 repeat occupies 148 to 156 (QDTTLEQEK). The CLE-2 repeat unit spans residues 157–168 (RAVPAGPDPKHH). The A-3 repeat unit spans residues 169–177 (EETTLEQEK). Residues 178–189 (RVAGAGPDPIHH) form a CLE-3 repeat. Residues 190–198 (QDTTLEQEK) form an A-4 repeat. The CLE-4 repeat unit spans residues 199 to 210 (RAVPAGPDPTHH). Residues 211–219 (EETTLEQEK) form an A-5 repeat. The stretch at 220 to 231 (RAVPAGPDPKHH) is one CLE-5 repeat. Residues 232-240 (EETTFEQEK) form an A-6 repeat. The CLE-6 repeat unit spans residues 241–252 (RGAPAGPDPIHH).

It belongs to the CLV3/ESR signal peptide family. As to expression, highly expressed exclusively within the dorsal esophageal gland cell during syncytium formation in host plants.

The protein localises to the secreted. Its subcellular location is the host cytoplasm. It is found in the host extracellular space. The protein resides in the extracellular space. It localises to the apoplast. In terms of biological role, mimics host plant CLE extracellular signal peptides that regulate cell fate. May play a role in the differentiation or division of feeding cells (syncytia) induced in plant roots during infection. In Globodera rostochiensis (Golden nematode worm), this protein is CLAVATA3/ESR (CLE)-related protein 4A-2 (CLE-4A-2).